Here is a 175-residue protein sequence, read N- to C-terminus: UPF0398 protein SPD_0338 (175 aa).

This sequence belongs to the UPF0398 family.

This chain is UPF0398 protein SPD_0338, found in Streptococcus pneumoniae serotype 2 (strain D39 / NCTC 7466).